The primary structure comprises 365 residues: tRNA N6-adenosine threonylcarbamoyltransferase (365 aa).

Fe cation is bound by residues His-119 and His-123. Substrate is bound by residues 141–145 (LVSGG), Asp-174, Gly-187, and Asn-289. Asp-317 provides a ligand contact to Fe cation. The tract at residues 342–365 (ARPRWPLDSKSPAMLGSGKKGAKA) is disordered.

It belongs to the KAE1 / TsaD family. The cofactor is Fe(2+).

It is found in the cytoplasm. The enzyme catalyses L-threonylcarbamoyladenylate + adenosine(37) in tRNA = N(6)-L-threonylcarbamoyladenosine(37) in tRNA + AMP + H(+). Required for the formation of a threonylcarbamoyl group on adenosine at position 37 (t(6)A37) in tRNAs that read codons beginning with adenine. Is involved in the transfer of the threonylcarbamoyl moiety of threonylcarbamoyl-AMP (TC-AMP) to the N6 group of A37, together with TsaE and TsaB. TsaD likely plays a direct catalytic role in this reaction. This is tRNA N6-adenosine threonylcarbamoyltransferase from Roseobacter denitrificans (strain ATCC 33942 / OCh 114) (Erythrobacter sp. (strain OCh 114)).